A 274-amino-acid chain; its full sequence is WIMGHMVNEIYQIDEFVDLGANSIETDITFDENAVAEYSYHGVPCDCRRWCHKWEYVNDFLNALRRATTPGDSKYRRELVLVVFDLKTGDLSSSTANKGGKLFAQKLLQHYWNGGNNGGRAYIIISIPDIDHYAFISGFRNALKEAGHEELLEKVGYDFSGNDDLNSIRNALHKAGVKDKEHVWQSDGITNCILRGLSRVREAVRNRDSSNGYINKVYYWTIEKYVSVRDALDAGVDGIMTNEPDVIVNVLNEKAYKQRFRLANYDDNPWETYQ.

The active site involves H5. Mg(2+)-binding residues include E25 and D27. The Nucleophile role is filled by H41. 2 cysteine pairs are disulfide-bonded: C45–C51 and C47–C192. D85 provides a ligand contact to Mg(2+).

This sequence belongs to the arthropod phospholipase D family. Class II subfamily. The cofactor is Mg(2+). Expressed by the venom gland.

The protein resides in the secreted. The catalysed reaction is an N-(acyl)-sphingosylphosphocholine = an N-(acyl)-sphingosyl-1,3-cyclic phosphate + choline. It carries out the reaction an N-(acyl)-sphingosylphosphoethanolamine = an N-(acyl)-sphingosyl-1,3-cyclic phosphate + ethanolamine. The enzyme catalyses a 1-acyl-sn-glycero-3-phosphocholine = a 1-acyl-sn-glycero-2,3-cyclic phosphate + choline. It catalyses the reaction a 1-acyl-sn-glycero-3-phosphoethanolamine = a 1-acyl-sn-glycero-2,3-cyclic phosphate + ethanolamine. Dermonecrotic toxins cleave the phosphodiester linkage between the phosphate and headgroup of certain phospholipids (sphingolipid and lysolipid substrates), forming an alcohol (often choline) and a cyclic phosphate. This toxin acts on sphingomyelin (SM). It may also act on ceramide phosphoethanolamine (CPE), lysophosphatidylcholine (LPC) and lysophosphatidylethanolamine (LPE), but not on lysophosphatidylserine (LPS), and lysophosphatidylglycerol (LPG). It acts by transphosphatidylation, releasing exclusively cyclic phosphate products as second products. Induces dermonecrosis, hemolysis, increased vascular permeability, edema, inflammatory response, and platelet aggregation. The protein is Dermonecrotic toxin LarSicTox-alphaIV1 of Loxosceles arizonica (Arizona brown spider).